The chain runs to 404 residues: 6-deoxyerythronolide B hydroxylase (404 aa).

Cys-351 contributes to the heme binding site.

This sequence belongs to the cytochrome P450 family. It depends on heme as a cofactor.

The protein resides in the cytoplasm. The catalysed reaction is 6-deoxyerythronolide B + 2 reduced [2Fe-2S]-[ferredoxin] + O2 + 2 H(+) = erythronolide B + 2 oxidized [2Fe-2S]-[ferredoxin] + H2O. It functions in the pathway antibiotic biosynthesis; erythromycin biosynthesis. Its function is as follows. Catalyzes the conversion of 6-deoxyerythronolide B (6-DEB) to erythronolide B (EB) by the insertion of an oxygen at the 6S position of 6-DEB. Requires the participation of a ferredoxin and a ferredoxin reductase for the transfer of electrons from NADPH to the monooxygenase. In Saccharopolyspora erythraea (strain ATCC 11635 / DSM 40517 / JCM 4748 / NBRC 13426 / NCIMB 8594 / NRRL 2338), this protein is 6-deoxyerythronolide B hydroxylase.